The following is a 305-amino-acid chain: tRNA dimethylallyltransferase (305 aa).

An ATP-binding site is contributed by 15 to 22 (GPTASGKS). 17-22 (TASGKS) is a binding site for substrate. Interaction with substrate tRNA regions lie at residues 40-43 (DSMQ) and 164-168 (QRIVR).

This sequence belongs to the IPP transferase family. As to quaternary structure, monomer. Requires Mg(2+) as cofactor.

It carries out the reaction adenosine(37) in tRNA + dimethylallyl diphosphate = N(6)-dimethylallyladenosine(37) in tRNA + diphosphate. Functionally, catalyzes the transfer of a dimethylallyl group onto the adenine at position 37 in tRNAs that read codons beginning with uridine, leading to the formation of N6-(dimethylallyl)adenosine (i(6)A). The protein is tRNA dimethylallyltransferase of Sinorhizobium medicae (strain WSM419) (Ensifer medicae).